The primary structure comprises 484 residues: Acetyl-coenzyme A carboxylase carboxyl transferase subunit beta, chloroplastic (484 aa).

Residues 223–484 form the CoA carboxyltransferase N-terminal domain; it reads LWIQCDNCYG…LHAFFPLNKN (262 aa). Zn(2+) contacts are provided by cysteine 227, cysteine 230, cysteine 243, and cysteine 246. The C4-type zinc-finger motif lies at 227 to 246; that stretch reads CDNCYGLMYKKVKMNVCEQC.

The protein belongs to the AccD/PCCB family. Acetyl-CoA carboxylase is a heterohexamer composed of biotin carboxyl carrier protein, biotin carboxylase and 2 subunits each of ACCase subunit alpha and ACCase plastid-coded subunit beta (accD). Requires Zn(2+) as cofactor.

The protein resides in the plastid. Its subcellular location is the chloroplast stroma. It catalyses the reaction N(6)-carboxybiotinyl-L-lysyl-[protein] + acetyl-CoA = N(6)-biotinyl-L-lysyl-[protein] + malonyl-CoA. It participates in lipid metabolism; malonyl-CoA biosynthesis; malonyl-CoA from acetyl-CoA: step 1/1. Functionally, component of the acetyl coenzyme A carboxylase (ACC) complex. Biotin carboxylase (BC) catalyzes the carboxylation of biotin on its carrier protein (BCCP) and then the CO(2) group is transferred by the transcarboxylase to acetyl-CoA to form malonyl-CoA. The chain is Acetyl-coenzyme A carboxylase carboxyl transferase subunit beta, chloroplastic from Olimarabidopsis pumila (Dwarf rocket).